The primary structure comprises 203 residues: Probable nicotinate-nucleotide adenylyltransferase (203 aa).

Belongs to the NadD family.

The enzyme catalyses nicotinate beta-D-ribonucleotide + ATP + H(+) = deamido-NAD(+) + diphosphate. Its pathway is cofactor biosynthesis; NAD(+) biosynthesis; deamido-NAD(+) from nicotinate D-ribonucleotide: step 1/1. Catalyzes the reversible adenylation of nicotinate mononucleotide (NaMN) to nicotinic acid adenine dinucleotide (NaAD). This Prosthecochloris aestuarii (strain DSM 271 / SK 413) protein is Probable nicotinate-nucleotide adenylyltransferase.